Reading from the N-terminus, the 60-residue chain is UPF0509 protein Ent638_2183 (60 aa).

This sequence belongs to the UPF0509 family.

The chain is UPF0509 protein Ent638_2183 from Enterobacter sp. (strain 638).